A 334-amino-acid polypeptide reads, in one-letter code: Aspartate carbamoyltransferase catalytic subunit (334 aa).

Carbamoyl phosphate-binding residues include R71 and T72. K99 contributes to the L-aspartate binding site. Carbamoyl phosphate contacts are provided by R121, H151, and Q154. The L-aspartate site is built by R184 and R239. Residues G280 and P281 each contribute to the carbamoyl phosphate site.

It belongs to the aspartate/ornithine carbamoyltransferase superfamily. ATCase family. In terms of assembly, heterododecamer (2C3:3R2) of six catalytic PyrB chains organized as two trimers (C3), and six regulatory PyrI chains organized as three dimers (R2).

It carries out the reaction carbamoyl phosphate + L-aspartate = N-carbamoyl-L-aspartate + phosphate + H(+). Its pathway is pyrimidine metabolism; UMP biosynthesis via de novo pathway; (S)-dihydroorotate from bicarbonate: step 2/3. In terms of biological role, catalyzes the condensation of carbamoyl phosphate and aspartate to form carbamoyl aspartate and inorganic phosphate, the committed step in the de novo pyrimidine nucleotide biosynthesis pathway. The protein is Aspartate carbamoyltransferase catalytic subunit of Pseudomonas putida (Arthrobacter siderocapsulatus).